A 615-amino-acid chain; its full sequence is Increased rDNA silencing protein 4 (615 aa).

Disordered stretches follow at residues 38-135 (SNEV…SSHS), 152-260 (LLGI…NRSQ), 277-304 (PSIA…NYSS), and 323-445 (KPKH…NEDK). Residues 50 to 65 (VSRNPQTRLSEPSLQK) show a composition bias toward polar residues. Low complexity-rich tracts occupy residues 121–135 (HSQS…SSHS) and 157–168 (SRSSSRNGSNES). Ser-180 bears the Phosphoserine mark. Residues 184–198 (LLTSFSSGRRLSSSS) are compositionally biased toward low complexity. A compositionally biased stretch (polar residues) spans 248 to 260 (NPDTSDVISNRSQ). The span at 281-290 (SSNTTTTTSN) shows a compositional bias: low complexity. Residues 365–377 (ENDHASSLHEGNL) are compositionally biased toward basic and acidic residues. Positions 389–402 (DVYDDTDSDSESDQ) are enriched in acidic residues. Residues 409–438 (KPRKRDRIKRKIRNSANKTAHHRPIHRTRD) show a composition bias toward basic residues. The region spanning 460-571 (ERKRYESMWV…QCVWDSVDRY (112 aa)) is the EH domain.

This sequence belongs to the IRS4 family. Interacts with INP51.

Functionally, with TAX4, acts as a positive regulator of INP51 activity and phosphatidylinositol 4,5-bisphosphate turnover. Negatively regulates signaling through the cell integrity pathway, including the MAP kinase SLT2. Also seems to be involved in rDNA silencing. This Saccharomyces cerevisiae (strain ATCC 204508 / S288c) (Baker's yeast) protein is Increased rDNA silencing protein 4 (IRS4).